Reading from the N-terminus, the 361-residue chain is Chorismate synthase (361 aa).

Arg-47 is an NADP(+) binding site. FMN contacts are provided by residues 124 to 126 (RAS), Gly-286, 301 to 305 (KPTAT), and Arg-327.

It belongs to the chorismate synthase family. As to quaternary structure, homotetramer. Requires FMNH2 as cofactor.

The catalysed reaction is 5-O-(1-carboxyvinyl)-3-phosphoshikimate = chorismate + phosphate. It participates in metabolic intermediate biosynthesis; chorismate biosynthesis; chorismate from D-erythrose 4-phosphate and phosphoenolpyruvate: step 7/7. Functionally, catalyzes the anti-1,4-elimination of the C-3 phosphate and the C-6 proR hydrogen from 5-enolpyruvylshikimate-3-phosphate (EPSP) to yield chorismate, which is the branch point compound that serves as the starting substrate for the three terminal pathways of aromatic amino acid biosynthesis. This reaction introduces a second double bond into the aromatic ring system. The chain is Chorismate synthase from Prochlorococcus marinus (strain NATL1A).